The sequence spans 138 residues: UPF0310 protein MAV_1800 (138 aa).

The protein belongs to the UPF0310 family.

The chain is UPF0310 protein MAV_1800 from Mycobacterium avium (strain 104).